Here is a 137-residue protein sequence, read N- to C-terminus: Endoribonuclease YbeY (137 aa).

Positions 105, 109, and 115 each coordinate Zn(2+).

The protein belongs to the endoribonuclease YbeY family. The cofactor is Zn(2+).

It localises to the cytoplasm. Functionally, single strand-specific metallo-endoribonuclease involved in late-stage 70S ribosome quality control and in maturation of the 3' terminus of the 16S rRNA. The protein is Endoribonuclease YbeY of Chlorobaculum tepidum (strain ATCC 49652 / DSM 12025 / NBRC 103806 / TLS) (Chlorobium tepidum).